A 304-amino-acid polypeptide reads, in one-letter code: Calcium release-activated calcium channel protein 1 (304 aa).

Positions 1–11 are enriched in pro residues; the sequence is MHPEPAPPPSH. The interval 1–50 is disordered; sequence MHPEPAPPPSHSNPELPVSGGSSTSGSRRSRRRSGDGEPSGAPPLPPPPP. Topologically, residues 1–89 are cytoplasmic; sequence MHPEPAPPPS…KLYLSRAKLK (89 aa). The tract at residues 3–49 is required for generation of inwardly rectifying CRAC currents; the sequence is PEPAPPPSHSNPELPVSGGSSTSGSRRSRRRSGDGEPSGAPPLPPPP. Over residues 12 to 27 the composition is skewed to low complexity; it reads SNPELPVSGGSSTSGS. The interval 39–61 is AKAP5 association region; that stretch reads PSGAPPLPPPPPAVSYPDWIGQS. A compositionally biased stretch (pro residues) spans 41-50; that stretch reads GAPPLPPPPP. Positions 72-92 are interaction with STIM1; the sequence is SMQALSWRKLYLSRAKLKASS. A helical transmembrane segment spans residues 90 to 107; it reads ASSRTSALLSGFAMVAMV. Residues 108 to 121 lie on the Extracellular side of the membrane; the sequence is EVQLDTDHDYPPGL. Residues 122–142 form a helical membrane-spanning segment; it reads LIVFSACTTVLVAVHLFALMI. Over 143–175 the chain is Cytoplasmic; the sequence is STCILPNIEAVSNVHNLNSVKESPHERMHRHIE. A helical transmembrane segment spans residues 176–196; that stretch reads LAWAFSTVIGTLLFLAEVVLL. Topologically, residues 197–237 are extracellular; that stretch reads CWVKFLPLKRQAGQPSPTKPPAESVIVANHSDSSGITPGEA. A glycan (N-linked (GlcNAc...) asparagine) is linked at Asn-225. The helical transmembrane segment at 238-258 threads the bilayer; that stretch reads AAIASTAIMVPCGLVFIVFAV. Topologically, residues 259-304 are cytoplasmic; it reads HFYRSLVSHKTDRQFQELNELAEFARLQDQLDHRGDHSLTPGTHYA. Residues 275-295 form an interaction with STIM1 region; it reads ELNELAEFARLQDQLDHRGDH. Residue Thr-298 is modified to Phosphothreonine.

It belongs to the Orai family. As to quaternary structure, oligomerizes in homomeric and heteromeric ORAI complexes. Native CRAC channels most likely consist of hexameric ORAI heteromers, implying that diverse ORAI1, ORAI2 and ORAI3 subunit combinations with distinct biophysical properties can operate in a cell-type specific way. ARC channels are heteropentamers consisting of three ORAI1 and two ORAI3 subunits. Interacts with STIM1 and STIM2; this regulates channel activity. Interacts with CALM; this may displace STIM1 and STIM2 and might thereby modulate channel activity. Interacts (via N-terminus) with AKAP5 upon store depletion. Interacts with CRACR2A/EFCAB4B; the interaction is direct and takes place in absence of Ca(2+). Forms a complex with CRACR2A/EFCAB4B and STIM1 at low concentration of Ca(2+), the complex dissociates at elevated Ca(2+) concentrations. Interacts with ASPH (isoform 8). Interacts with SLC35G1. Interacts with UBQLN1. Interacts with ADCY8; interaction is calcium store depletion independent; interaction occurs in membrane raft; interaction increases markedly after store depletion; positively regulates SOCE-induced adenylate cyclase activity; contributes to the targeting of ADCY8 to discrete regions of the plasma membrane that are shielded from other calcium events. Interacts with EFHB; the interaction takes place upon Ca(2+)-store depletion. Interacts (via N- and C-termini) with ATP2C2 (via N-terminus); this interaction regulates Ca(2+) influx at the plasma membrane. Interacts with TSPAN18; this interaction regulates ORAI1 exit from the endoplasmic (ER), and/or Golgi, and trafficking to the cell surface. N-glycosylated. N-glycosylation inhibits channel activity in T cells. Post-translationally, ubiquitinated. In terms of processing, cys-195 is oxidated, leading to inactivation of channel activity. As to expression, expressed in lactating mammary epithelium (at protein level).

It is found in the cell membrane. Its subcellular location is the basolateral cell membrane. It carries out the reaction Ca(2+)(in) = Ca(2+)(out). Its activity is regulated as follows. Oxidation at Cys-197 leads to inactivation of channel activity. In terms of biological role, pore-forming subunit of two major inward rectifying Ca(2+) channels at the plasma membrane: Ca(2+) release-activated Ca(2+) (CRAC) channels and arachidonate-regulated Ca(2+)-selective (ARC) channels. Assembles with ORAI2 and ORAI3 to form hexameric CRAC channels that mediate Ca(2+) influx upon depletion of endoplasmic reticulum Ca(2+) store and channel activation by Ca(2+) sensor STIM1, a process known as store-operated Ca(2+) entry (SOCE). Various pore subunit combinations may account for distinct CRAC channel spatiotemporal and cell-type specific dynamics. ORAI1 mainly contributes to the generation of Ca(2+) plateaus involved in sustained Ca(2+) entry and is dispensable for cytosolic Ca(2+) oscillations, whereas ORAI2 and ORAI3 generate oscillatory patterns. CRAC channels assemble in Ca(2+) signaling microdomains where Ca(2+) influx is coupled to calmodulin and calcineurin signaling and activation of NFAT transcription factors recruited to ORAI1 via AKAP5. Activates NFATC2/NFAT1 and NFATC3/NFAT4-mediated transcriptional responses. CRAC channels are the main pathway for Ca(2+) influx in T cells and promote the immune response to pathogens by activating NFAT-dependent cytokine and chemokine transcription. Assembles with ORAI3 to form channels that mediate store-independent Ca(2+) influx in response to inflammatory metabolites arachidonate or its derivative leukotriene C4, termed ARC and LRC channels respectively. Plays a prominent role in Ca(2+) influx at the basolateral membrane of mammary epithelial cells independently of the Ca(2+) content of endoplasmic reticulum or Golgi stores. May mediate transepithelial transport of large quantities of Ca(2+) for milk secretion. The chain is Calcium release-activated calcium channel protein 1 (Orai1) from Mus musculus (Mouse).